The primary structure comprises 568 residues: Zinc finger protein 648 (568 aa).

Over residues 1-11 (MAQVDSQDRWG) the composition is skewed to basic and acidic residues. A disordered region spans residues 1 to 106 (MAQVDSQDRW…MSGKASWSRD (106 aa)). 10 consecutive C2H2-type zinc fingers follow at residues 279–301 (YACELCGKAYSHRGTLQQHRRLH), 307–329 (YQCSFCDKAYTWSSDHRKHIRTH), 335–358 (YPCPDCGKAFVRSSDLRKHQRNMH), 364–386 (FPCSECGLTFNKPLSLLRHQRTH), 392–414 (FRCPACDREFAVASRMVEHQRVH), 420–442 (FPCPTCGKCFTKSSNLSEHQTLH), 448–470 (FKCADCGVAFAQPSRLVRHQRIH), 476–498 (FPCTQCGQAFARSSTLKRHQQIH), 504–526 (FLCAECGRAFRIASELAQHIRMH), and 532–554 (YQCEDCGQAFTRSNHLQRHRAKH). The disordered stretch occupies residues 548-568 (QRHRAKHGTCKKEPIPSSSDE).

Belongs to the krueppel C2H2-type zinc-finger protein family.

The protein localises to the nucleus. In terms of biological role, may be involved in transcriptional regulation. This chain is Zinc finger protein 648 (ZNF648), found in Homo sapiens (Human).